A 555-amino-acid chain; its full sequence is Dihydroxy-acid dehydratase (555 aa).

Cysteine 46 provides a ligand contact to [2Fe-2S] cluster. Position 78 (aspartate 78) interacts with Mg(2+). Cysteine 119 provides a ligand contact to [2Fe-2S] cluster. Positions 120 and 121 each coordinate Mg(2+). An N6-carboxylysine modification is found at lysine 121. Residue cysteine 191 coordinates [2Fe-2S] cluster. Position 442 (glutamate 442) interacts with Mg(2+). The active-site Proton acceptor is serine 468.

Belongs to the IlvD/Edd family. As to quaternary structure, homodimer. [2Fe-2S] cluster serves as cofactor. Requires Mg(2+) as cofactor.

It carries out the reaction (2R)-2,3-dihydroxy-3-methylbutanoate = 3-methyl-2-oxobutanoate + H2O. The enzyme catalyses (2R,3R)-2,3-dihydroxy-3-methylpentanoate = (S)-3-methyl-2-oxopentanoate + H2O. The protein operates within amino-acid biosynthesis; L-isoleucine biosynthesis; L-isoleucine from 2-oxobutanoate: step 3/4. It participates in amino-acid biosynthesis; L-valine biosynthesis; L-valine from pyruvate: step 3/4. In terms of biological role, functions in the biosynthesis of branched-chain amino acids. Catalyzes the dehydration of (2R,3R)-2,3-dihydroxy-3-methylpentanoate (2,3-dihydroxy-3-methylvalerate) into 2-oxo-3-methylpentanoate (2-oxo-3-methylvalerate) and of (2R)-2,3-dihydroxy-3-methylbutanoate (2,3-dihydroxyisovalerate) into 2-oxo-3-methylbutanoate (2-oxoisovalerate), the penultimate precursor to L-isoleucine and L-valine, respectively. This Thermus thermophilus (strain ATCC 27634 / DSM 579 / HB8) protein is Dihydroxy-acid dehydratase.